The sequence spans 448 residues: Proteases secretion protein PrtE (448 aa).

Residues 1 to 30 (MTGMDITTQDELNEAAMRDRASRDEERALR) are Cytoplasmic-facing. Residues 31–50 (LGWWLVLAGFGGFLLWALLA) form a helical membrane-spanning segment. Residues 51–448 (PLDKGVAVQG…DRMHLALTEE (398 aa)) lie on the Periplasmic side of the membrane.

This sequence belongs to the membrane fusion protein (MFP) (TC 8.A.1) family.

It localises to the cell inner membrane. In terms of biological role, involved in the secretion of proteases A, B, C and G. The protein is Proteases secretion protein PrtE (prtE) of Dickeya chrysanthemi (Pectobacterium chrysanthemi).